We begin with the raw amino-acid sequence, 180 residues long: Isopentenyl-diphosphate Delta-isomerase (180 aa).

Mn(2+)-binding residues include His-26 and His-32. The Nudix hydrolase domain maps to 30-168 (ALHLAFSVLL…PELFTAWFPQ (139 aa)). Cys-70 is an active-site residue. Cys-70 contacts Mg(2+). A Mn(2+)-binding site is contributed by His-72. Glu-90 serves as a coordination point for Mg(2+). Mn(2+) is bound by residues Glu-117 and Glu-119. Glu-119 is a catalytic residue.

This sequence belongs to the IPP isomerase type 1 family. The cofactor is Mg(2+). Mn(2+) serves as cofactor.

The protein resides in the cytoplasm. It catalyses the reaction isopentenyl diphosphate = dimethylallyl diphosphate. Its pathway is isoprenoid biosynthesis; dimethylallyl diphosphate biosynthesis; dimethylallyl diphosphate from isopentenyl diphosphate: step 1/1. Catalyzes the 1,3-allylic rearrangement of the homoallylic substrate isopentenyl (IPP) to its highly electrophilic allylic isomer, dimethylallyl diphosphate (DMAPP). This is Isopentenyl-diphosphate Delta-isomerase from Photobacterium profundum (strain SS9).